The chain runs to 536 residues: uncharacterized protein (536 aa).

Residues 1–8 lie on the Cytoplasmic side of the membrane; it reads MVSIKRYE. Residues 9–29 form a helical membrane-spanning segment; that stretch reads IISFVIAAFFFLSGLSMWIAF. The Extracellular segment spans residues 30-502; the sequence is WPIFNSELRS…VWLGVIIVPR (473 aa). N-linked (GlcNAc...) asparagine glycosylation is found at Asn-73, Asn-236, Asn-363, and Asn-376. The helical transmembrane segment at 503 to 523 threads the bilayer; it reads IIEYLKFVLIFISICILTTLL. Residues 524 to 536 lie on the Cytoplasmic side of the membrane; it reads VIRVRVKGTVSVV.

Belongs to the CD36 family.

It localises to the membrane. This is an uncharacterized protein from Caenorhabditis elegans.